The primary structure comprises 993 residues: ATP-dependent DNA helicase MPH1 (993 aa).

The region spanning 94-261 (IVHKSLFQNT…EVVNNLDISK (168 aa)) is the Helicase ATP-binding domain. ATP is bound at residue 107-114 (IPTGMGKT). The short motif at 209–212 (DEAH) is the DEAH box element. The 149-residue stretch at 507–655 (KVERLHRQEQ…CIDYKKSDRI (149 aa)) folds into the Helicase C-terminal domain. The tract at residues 530-551 (NDKLERSARRTGSSEEAQISGM) is disordered. Positions 539–551 (RTGSSEEAQISGM) are enriched in polar residues.

It belongs to the DEAD box helicase family. DEAH subfamily. FANCM sub-subfamily. As to quaternary structure, interacts with the MHF histone-fold complex to form the FANCM-MHF complex.

Its subcellular location is the nucleus. It catalyses the reaction ATP + H2O = ADP + phosphate + H(+). Functionally, ATP-dependent DNA helicase involved in DNA damage repair by homologous recombination and in genome maintenance. Capable of unwinding D-loops. Plays a role in limiting crossover recombinants during mitotic DNA double-strand break (DSB) repair. Component of a FANCM-MHF complex which promotes gene conversion at blocked replication forks, probably by reversal of the stalled fork. This chain is ATP-dependent DNA helicase MPH1, found in Saccharomyces cerevisiae (strain YJM789) (Baker's yeast).